The following is a 185-amino-acid chain: Ribosome-recycling factor (185 aa).

Belongs to the RRF family.

It localises to the cytoplasm. Its function is as follows. Responsible for the release of ribosomes from messenger RNA at the termination of protein biosynthesis. May increase the efficiency of translation by recycling ribosomes from one round of translation to another. This is Ribosome-recycling factor from Campylobacter jejuni subsp. jejuni serotype O:23/36 (strain 81-176).